The chain runs to 277 residues: Sulfur carrier protein FdhD (277 aa).

Residue Cys-121 is the Cysteine persulfide intermediate of the active site. A Mo-bis(molybdopterin guanine dinucleotide)-binding site is contributed by 260–265 (FCKPGR).

It belongs to the FdhD family.

The protein resides in the cytoplasm. Required for formate dehydrogenase (FDH) activity. Acts as a sulfur carrier protein that transfers sulfur from IscS to the molybdenum cofactor prior to its insertion into FDH. This is Sulfur carrier protein FdhD from Escherichia coli O8 (strain IAI1).